Here is a 535-residue protein sequence, read N- to C-terminus: MLRLLLLWLWGPLGALAQGAPAGTAPTDDVVDLEFYTKRPLRSVSPSFLSITIDASLATDPRFLTFLGSPRLRALARGLSPAYLRFGGTKTDFLIFDPDKEPTSEERSYWKSQVNHDICRSEPVSAAVLRKLQVEWPFQELLLLREQYQKEFKNSTYSRSSVDMLYSFAKCSGLDLIFGLNALLRTPDLRWNSSNAQLLLDYCSSKGYNISWELGNEPNSFWKKAHILIDGLQLGEDFVELHKLLQRSAFQNAKLYGPDIGQPRGKTVKLLRSFLKAGGEVIDSLTWHHYYLNGRIATKEDFLSSDVLDTFILSVQKILKVTKEITPGKKVWLGETSSAYGGGAPLLSNTFAAGFMWLDKLGLSAQMGIEVVMRQVFFGAGNYHLVDENFEPLPDYWLSLLFKKLVGPRVLLSRVKGPDRSKLRVYLHCTNVYHPRYQEGDLTLYVLNLHNVTKHLKVPPPLFRKPVDTYLLKPSGPDGLLSKSVQLNGQILKMVDEQTLPALTEKPLPAGSALSLPAFSYGFFVIRNAKIAACI.

Positions 1–27 are cleaved as a signal peptide; the sequence is MLRLLLLWLWGPLGALAQGAPAGTAPT. Residues 54 to 56 and T89 contribute to the heparan sulfate group site; that span reads DAS. A propeptide spans 102–149 (linker peptide); it reads PTSEERSYWKSQVNHDICRSEPVSAAVLRKLQVEWPFQELLLLREQYQ. C119 and C171 are disulfide-bonded. 150 to 154 lines the heparan sulfate group pocket; sequence KEFKN. 2 N-linked (GlcNAc...) asparagine glycosylation sites follow: N192 and N209. E217 serves as the catalytic Proton donor. Residues 262–272, H288, and R295 each bind heparan sulfate group; that span reads QPRGKTVKLLR. The interval 280–409 is required for heterodimerization with the heparanase 8 kDa subunit; it reads EVIDSLTWHH…LLFKKLVGPR (130 aa). The Nucleophile role is filled by E335. Residues 340–342 and 381–383 contribute to the heparan sulfate group site; these read YGG and GNY. C429 and C534 are joined by a disulfide. N451 is a glycosylation site (N-linked (GlcNAc...) asparagine). The tract at residues 519 to 535 is required for transferring proheparanase to the Golgi apparatus, secretion and subsequent enzyme activity and for enhancement of PKB/AKT1 phosphorylation; it reads FSYGFFVIRNAKIAACI.

The protein belongs to the glycosyl hydrolase 79 family. In terms of assembly, heterodimer; heterodimer formation between the 8 kDa and the 50 kDa subunits is required for enzyme activity. Interacts with TF; the interaction, inhibited by heparin, enhances the generation of activated factor X and activates coagulation. Interacts with HRG; the interaction is enhanced at acidic pH, partially inhibits binding of HPSE to cell surface receptors and modulates its enzymatic activity. Interacts with SDC1; the interaction enhances the shedding of SDC1. Interacts with HPSE2. Proteolytically processed. The cleavage of the 65 kDa form leads to the generation of a linker peptide, and the 8 kDa and 50 kDa products. The active form, the 8/50 kDa heterodimer, is resistant to degradation. Complete removal of the linker peptide appears to be a prerequisite to the complete activation of the enzyme. Post-translationally, N-glycosylated. Glycosylation of the 50 kDa subunit appears to be essential for its solubility. Expressed in skin, mainly in the stratum granulosum and the first layer of the stratum corneum in the upper part of the epidermis. Also detected in hair follicles and in sebaceous glands.

The protein resides in the lysosome membrane. It localises to the secreted. The protein localises to the nucleus. It carries out the reaction endohydrolysis of (1-&gt;4)-beta-D-glycosidic bonds of heparan sulfate chains in heparan sulfate proteoglycan.. Its activity is regulated as follows. Inhibited by EDTA and activated by calcium and magnesium. Inhibited by laminarin sulfate and, to a lower extent, by heparin and sulfamin. In terms of biological role, endoglycosidase that cleaves heparan sulfate proteoglycans (HSPGs) into heparan sulfate side chains and core proteoglycans. Participates in extracellular matrix (ECM) degradation and remodeling. Selectively cleaves the linkage between a glucuronic acid unit and an N-sulfo glucosamine unit carrying either a 3-O-sulfo or a 6-O-sulfo group. Can also cleave the linkage between a glucuronic acid unit and an N-sulfo glucosamine unit carrying a 2-O-sulfo group, but not linkages between a glucuronic acid unit and a 2-O-sulfated iduronic acid moiety. It is essentially inactive at neutral pH but becomes active under acidic conditions such as during tumor invasion and in inflammatory processes. Facilitates cell migration associated with metastasis, wound healing and inflammation. Enhances shedding of syndecans, and increases endothelial invasion and angiogenesis in myelomas. Acts as a procoagulant by increasing the generation of activation factor X in the presence of tissue factor and activation factor VII. Increases cell adhesion to the extracellular matrix (ECM), independent of its enzymatic activity. Induces AKT1/PKB phosphorylation via lipid rafts increasing cell mobility and invasion. Heparin increases this AKT1/PKB activation. Regulates osteogenesis. Enhances angiogenesis through up-regulation of SRC-mediated activation of VEGF. Implicated in hair follicle inner root sheath differentiation and hair homeostasis. The protein is Heparanase (Hpse) of Mus musculus (Mouse).